The primary structure comprises 285 residues: Tropomyosin alpha-3 chain (285 aa).

Residues 1–285 (MMEAIKKKMQ…DHALNDMTSI (285 aa)) adopt a coiled-coil conformation. Position 2 is an N-acetylmethionine (Met-2). N-acetylalanine is present on Met-2. Thr-54 bears the Phosphothreonine mark. Ser-62 and Ser-88 each carry phosphoserine. The residue at position 109 (Thr-109) is a Phosphothreonine. 2 positions are modified to phosphoserine: Ser-207 and Ser-216. Ile-228 is modified (N6-acetyllysine). Thr-253 is modified (phosphothreonine). Residue Tyr-262 is modified to Phosphotyrosine. Ser-272 is subject to Phosphoserine. Thr-283 carries the phosphothreonine modification. A Phosphoserine modification is found at Ser-284.

This sequence belongs to the tropomyosin family. As to quaternary structure, homodimer. Heterodimer of an alpha (TPM1, TPM3 or TPM4) and a beta (TPM2) chain. Interacts with TMOD1. Interacts with TNNT1.

The protein localises to the cytoplasm. The protein resides in the cytoskeleton. Binds to actin filaments in muscle and non-muscle cells. Plays a central role, in association with the troponin complex, in the calcium dependent regulation of vertebrate striated muscle contraction. Smooth muscle contraction is regulated by interaction with caldesmon. In non-muscle cells is implicated in stabilizing cytoskeleton actin filaments. In Mus musculus (Mouse), this protein is Tropomyosin alpha-3 chain (Tpm3).